The sequence spans 394 residues: Saposin-like protein 11 (394 aa).

An N-terminal signal peptide occupies residues 1–18 (MSVFRFLLFLSLLVGSNA). N-linked (GlcNAc...) asparagine glycosylation is found at Asn-25 and Asn-272. In terms of domain architecture, Saposin B-type spans 306-394 (GNMVCDICEK…SFCKHVPFCK (89 aa)). Disulfide bonds link Cys-310-Cys-393, Cys-313-Cys-387, and Cys-343-Cys-359.

This is Saposin-like protein 11 (spp-11) from Caenorhabditis elegans.